The following is a 152-amino-acid chain: Aspartate-rich protein (152 aa).

Positions 1–19 (MQKLLLAVLFFSLLAVATA) are cleaved as a signal peptide. Basic and acidic residues predominate over residues 82–113 (ATPKTEAEPGSLDKGEGTKGEKGKEGKKEKGE). The disordered stretch occupies residues 82–152 (ATPKTEAEPG…VHENDDENED (71 aa)). The span at 135-152 (DDDDDRDDVHENDDENED) shows a compositional bias: acidic residues.

As to expression, prismatic layer of shell (at protein level). Expressed primarily in the mantle with highest level in the mantle edge and lower level in the mantle pallium.

It is found in the secreted. This Margaritifera margaritifera (Freshwater pearl mussel) protein is Aspartate-rich protein.